A 153-amino-acid chain; its full sequence is MADTLMSDIPFWQRKTLDEMTDAEWESLCDGCGQCCLHKLMDEDTDEIYFTNVACRQLNIKTCQCRHYERRFEFEPDCIKLTRENLPDFEWLPMTCAYRLLAEGKPLPTWHPLLTGSKAAMHGERISVRHIAVKESEVRDWQDHILNKPSWAE.

Belongs to the UPF0260 family.

The polypeptide is UPF0260 protein YcgN (Salmonella agona (strain SL483)).